The following is a 225-amino-acid chain: Small ribosomal subunit protein uS3 (225 aa).

The 69-residue stretch at 38-106 folds into the KH type-2 domain; the sequence is IRRFLQKKFK…PIGMNIIEVK (69 aa).

It belongs to the universal ribosomal protein uS3 family. In terms of assembly, part of the 30S ribosomal subunit. Forms a tight complex with proteins S10 and S14.

In terms of biological role, binds the lower part of the 30S subunit head. Binds mRNA in the 70S ribosome, positioning it for translation. The protein is Small ribosomal subunit protein uS3 of Leptospira biflexa serovar Patoc (strain Patoc 1 / Ames).